A 1482-amino-acid chain; its full sequence is Cystic fibrosis transmembrane conductance regulator (1482 aa).

The Cytoplasmic segment spans residues 1-77 (MQRSPLEKAN…KLINALRRCF (77 aa)). A helical transmembrane segment spans residues 78 to 98 (FWRFVFHGIILYLGEVTKAVQ). The ABC transmembrane type-1 1 domain occupies 81–365 (FVFHGIILYL…WAVQTWYDSL (285 aa)). At 99–122 (PLLLGRIIASYDPDNKVERSIAIY) the chain is on the extracellular side. Residues 123–146 (LGIGLCLLFIVRTLLLHPAIFGLH) form a helical membrane-spanning segment. The Cytoplasmic segment spans residues 147 to 195 (HMGMQMRIALFSLIYKKTLKLSSRVLDKISTGQLISLLSNNLNKFDEGL). Residues 196–216 (ALAHFVWIVPLQVVLLMGLLW) form a helical membrane-spanning segment. Over 217 to 222 (DLLQAS) the chain is Extracellular. The helical transmembrane segment at 223–243 (AFCGLAFLIVLALFQAWLGQM) threads the bilayer. Residues 244–298 (MMKYRERRAGKINERLVITSEMIDNIQSVKAYCWEEAMEKMIENLRETELKLTRK) lie on the Cytoplasmic side of the membrane. The chain crosses the membrane as a helical span at residues 299–319 (TAYVRYFNSSAFFFSGFFVVF). Over 320-339 (LAVLPYALIKGIILRKIFTT) the chain is Extracellular. A helical membrane pass occupies residues 340–358 (ISFCIVLRMAVTRQFPWAV). The Cytoplasmic portion of the chain corresponds to 359 to 859 (QTWYDSLGAI…YLRYITIHKN (501 aa)). ATP is bound by residues Trp-401, Ser-434, 458–465 (GSTGAGKT), and Gln-493. The ABC transporter 1 domain occupies 423–646 (NGDNGLFFSN…RPDFSSKLMG (224 aa)). The S-palmitoyl cysteine moiety is linked to residue Cys-524. Residues Ser-549 and Ser-660 each carry the phosphoserine modification. The segment at 654–832 (SAERRSSILT…DEINEEDLKE (179 aa)) is disordered R region. Ser-670 is subject to Phosphoserine; by PKA. Ser-686 carries the post-translational modification Phosphoserine. A Glycyl lysine isopeptide (Lys-Gly) (interchain with G-Cter in ubiquitin) cross-link involves residue Lys-688. Phosphoserine is present on residues Ser-700, Ser-712, Ser-737, Ser-769, Ser-796, and Ser-814. Residues 860 to 880 (LVFVLIWCLVIFLVEVAASLV) form a helical membrane-spanning segment. The 297-residue stretch at 860-1156 (LVFVLIWCLV…AVNSSIDVDS (297 aa)) folds into the ABC transmembrane type-1 2 domain. The Extracellular segment spans residues 881–919 (GLWLLEDISFKDKTNGTNGANNTFPVIITDTSKYYLFYI). 2 N-linked (GlcNAc...) asparagine glycosylation sites follow: Asn-895 and Asn-901. The chain crosses the membrane as a discontinuously helical span at residues 920–940 (YVGIADTFFALGIFRGLPLVH). The Cytoplasmic portion of the chain corresponds to 941 to 991 (TLISVSKILHHKMLYSVLKAPMSTFNTLKPGGILNRFSKDIAILDDLLPLT). A helical membrane pass occupies residues 992–1012 (IFDFIQLILIVVGALIVVSAI). At 1013 to 1014 (RP) the chain is on the extracellular side. The chain crosses the membrane as a helical span at residues 1015 to 1035 (YIFLATVPVIIAFIMLRAYFL). The Cytoplasmic portion of the chain corresponds to 1036–1096 (QTSQQLKQLE…TASWFLYLST (61 aa)). The helical transmembrane segment at 1097–1117 (LRWFQMRIELVFVIFFIAVTF) threads the bilayer. Residues 1118-1131 (ISILTTGDGEGRVG) lie on the Extracellular side of the membrane. A helical transmembrane segment spans residues 1132–1152 (ILLTLAMNIMSTLQWAVNSSI). Over 1153–1482 (DVDSLMRSVS…TEEEVQETRL (330 aa)) the chain is Cytoplasmic. In terms of domain architecture, ABC transporter 2 spans 1212–1445 (MIVKDLTAKY…KSLYRQAISH (234 aa)). Residues Tyr-1221 and 1246-1253 (GRTGSGKS) contribute to the ATP site. An interaction with GORASP2 region spans residues 1388 to 1482 (RVLKNAFANC…TEEEVQETRL (95 aa)). Cys-1397 is lipidated: S-palmitoyl cysteine. Phosphoserine is present on residues Ser-1446 and Ser-1458. The PDZ-binding signature appears at 1480 to 1482 (TRL).

Belongs to the ABC transporter superfamily. ABCC family. CFTR transporter (TC 3.A.1.202) subfamily. As to quaternary structure, monomer; does not require oligomerization for channel activity. May form oligomers in the membrane. Interacts with SLC26A3, SLC26A6 and NHERF1. Interacts with SHANK2. Interacts with MYO6. Interacts (via C-terminus) with GOPC (via PDZ domain); this promotes CFTR internalization and thereby decreases channel activity. Interacts with SLC4A7 through NHERF1. Found in a complex with MYO5B and RAB11A. Interacts with ANO1. Interacts with SLC26A8. Interacts with AHCYL1; the interaction increases CFTR activity. Interacts with CSE1L. The core-glycosylated form interacts with GORASP2 (via PDZ GRASP-type 1 domain) in respone to ER stress. Interacts with MARCHF2; the interaction leads to CFTR ubiqtuitination and degradation. Interacts with ADGRG2. Post-translationally, N-glycosylated. In terms of processing, phosphorylated; cAMP treatment promotes phosphorylation and activates the channel. Dephosphorylation decreases the ATPase activity (in vitro). Phosphorylation at PKA sites activates the channel. Phosphorylation at PKC sites enhances the response to phosphorylation by PKA. Phosphorylated by AMPK; this inhibits channel activity. Ubiquitinated, leading to its degradation in the lysosome. Deubiquitination by USP10 in early endosomes enhances its endocytic recycling to the cell membrane. Ubiquitinated by RNF185 during ER stress. Ubiquitinated by MARCHF2.

The protein resides in the apical cell membrane. It localises to the early endosome membrane. The protein localises to the cell membrane. Its subcellular location is the recycling endosome membrane. It is found in the endoplasmic reticulum membrane. The protein resides in the nucleus. The catalysed reaction is ATP + H2O + closed Cl(-) channel = ADP + phosphate + open Cl(-) channel.. It carries out the reaction chloride(in) = chloride(out). It catalyses the reaction hydrogencarbonate(in) = hydrogencarbonate(out). The enzyme catalyses ATP + H2O = ADP + phosphate + H(+). Functionally, epithelial ion channel that plays an important role in the regulation of epithelial ion and water transport and fluid homeostasis. Mediates the transport of chloride ions across the cell membrane. Possesses an intrinsic ATPase activity and utilizes ATP to gate its channel; the passive flow of anions through the channel is gated by cycles of ATP binding and hydrolysis by the ATP-binding domains. The ion channel is also permeable to HCO(3)(-); selectivity depends on the extracellular chloride concentration. Exerts its function also by modulating the activity of other ion channels and transporters. Contributes to the regulation of the pH and the ion content of the epithelial fluid layer. Modulates the activity of the epithelial sodium channel (ENaC) complex, in part by regulating the cell surface expression of the ENaC complex. May regulate bicarbonate secretion and salvage in epithelial cells by regulating the transporter SLC4A7. Can inhibit the chloride channel activity of ANO1. Plays a role in the chloride and bicarbonate homeostasis during sperm epididymal maturation and capacitation. The chain is Cystic fibrosis transmembrane conductance regulator from Didelphis virginiana (North American opossum).